We begin with the raw amino-acid sequence, 208 residues long: FMN-dependent NADH:quinone oxidoreductase (208 aa).

FMN is bound by residues 17 to 19 (SNS), 99 to 102 (MWNL), and 143 to 146 (SRGG).

It belongs to the azoreductase type 1 family. Homodimer. The cofactor is FMN.

It catalyses the reaction 2 a quinone + NADH + H(+) = 2 a 1,4-benzosemiquinone + NAD(+). It carries out the reaction N,N-dimethyl-1,4-phenylenediamine + anthranilate + 2 NAD(+) = 2-(4-dimethylaminophenyl)diazenylbenzoate + 2 NADH + 2 H(+). Its function is as follows. Quinone reductase that provides resistance to thiol-specific stress caused by electrophilic quinones. Also exhibits azoreductase activity. Catalyzes the reductive cleavage of the azo bond in aromatic azo compounds to the corresponding amines. This chain is FMN-dependent NADH:quinone oxidoreductase, found in Staphylococcus aureus (strain bovine RF122 / ET3-1).